The sequence spans 583 residues: ATP-dependent lipid A-core flippase (583 aa).

The next 5 helical transmembrane spans lie at 27 to 47 (LAVAVVALIINAVSDTYMVSL), 69 to 89 (LLVFGLMFIRGISSFVSTYCL), 142 to 162 (ALVSIVREGTSIIGLLVLMFY), 165 to 185 (WQLSLVLILVAPVVAWAIGFV), and 249 to 269 (AAANPIIQMIASIAIVVVLYL). The 283-residue stretch at 28 to 310 (AVAVVALIIN…LTNVTSQFQR (283 aa)) folds into the ABC transmembrane type-1 domain. The ABC transporter domain occupies 342 to 578 (VNVKDISFTY…DGAYAQLHRI (237 aa)). Position 376-383 (376-383 (GRSGSGKS)) interacts with ATP.

The protein belongs to the ABC transporter superfamily. Lipid exporter (TC 3.A.1.106) family. In terms of assembly, homodimer.

It localises to the cell inner membrane. It carries out the reaction ATP + H2O + lipid A-core oligosaccharideSide 1 = ADP + phosphate + lipid A-core oligosaccharideSide 2.. Involved in lipopolysaccharide (LPS) biosynthesis. Translocates lipid A-core from the inner to the outer leaflet of the inner membrane. Transmembrane domains (TMD) form a pore in the inner membrane and the ATP-binding domain (NBD) is responsible for energy generation. The sequence is that of ATP-dependent lipid A-core flippase from Vibrio vulnificus (strain YJ016).